The sequence spans 336 residues: Dihydroorotate dehydrogenase (quinone) (336 aa).

Residues A62 to K66 and T86 each bind FMN. K66 is a substrate binding site. A substrate-binding site is contributed by N111 to F115. The FMN site is built by N139 and N172. N172 is a binding site for substrate. The active-site Nucleophile is S175. N177 is a substrate binding site. 2 residues coordinate FMN: K217 and T245. N246–T247 provides a ligand contact to substrate. FMN-binding positions include G268, G297, and Y318–S319.

The protein belongs to the dihydroorotate dehydrogenase family. Type 2 subfamily. As to quaternary structure, monomer. Requires FMN as cofactor.

It is found in the cell membrane. It carries out the reaction (S)-dihydroorotate + a quinone = orotate + a quinol. The protein operates within pyrimidine metabolism; UMP biosynthesis via de novo pathway; orotate from (S)-dihydroorotate (quinone route): step 1/1. Catalyzes the conversion of dihydroorotate to orotate with quinone as electron acceptor. The chain is Dihydroorotate dehydrogenase (quinone) from Escherichia coli O17:K52:H18 (strain UMN026 / ExPEC).